A 143-amino-acid polypeptide reads, in one-letter code: uncharacterized protein (143 aa).

An N-terminal signal peptide occupies residues 1 to 27 (MSDEIARLVADVFELAGLLRRSGEVVA).

This is an uncharacterized protein from Mycobacterium tuberculosis (strain CDC 1551 / Oshkosh).